The sequence spans 294 residues: Phosphonoacetaldehyde hydrolase (294 aa).

The active-site Nucleophile is D19. D19 and A21 together coordinate Mg(2+). K60 functions as the Schiff-base intermediate with substrate in the catalytic mechanism. Position 193 (D193) interacts with Mg(2+).

This sequence belongs to the HAD-like hydrolase superfamily. PhnX family. In terms of assembly, homodimer. Mg(2+) is required as a cofactor.

The enzyme catalyses phosphonoacetaldehyde + H2O = acetaldehyde + phosphate + H(+). Functionally, involved in phosphonate degradation. In Hahella chejuensis (strain KCTC 2396), this protein is Phosphonoacetaldehyde hydrolase.